The sequence spans 210 residues: MKLKILLHSSTYSSSFDTEEQQLPGPSTSYSEVTEQASPTRRRKPRKSDATSTTSPETEGVRLRRRRREGKSGPGSGETPRKRRRGGGRGGGETELGSAPSPAEVGSRHRQVERQGLSRLGLLQAEARDPPMILLKGTANSLKCWRYRKVNSNCCNFLFMSTVWNWVGDCSHNHSRMLIAFDSTDQRDAFVKHNLFPKLCTYTYGSLNSL.

The tract at residues Met-1 to Val-112 is disordered. Positions Pro-24–Pro-39 are enriched in polar residues.

It belongs to the papillomaviridae E8^E2C protein family.

The protein localises to the host nucleus. Plays a role in limiting the replication of viral DNA in keratinocytes. Recruits the host NCoR/SMRT complex to viral replication foci to mediate repression of both viral replication and transcription. In Human papillomavirus 4, this protein is Protein E8^E2C.